We begin with the raw amino-acid sequence, 308 residues long: Serpentine receptor class V-1 (308 aa).

Helical transmembrane passes span 15–35 (VSTA…YILF), 46–68 (PFFR…STFF), 88–108 (VVPI…IIFI), 135–155 (LLLI…STDF), 184–204 (AMVD…AIFI), 222–242 (LALS…CSLL), and 256–276 (TMWF…LLAL).

The protein belongs to the nematode receptor-like protein srv family.

It is found in the membrane. This Caenorhabditis elegans protein is Serpentine receptor class V-1 (srv-1).